Reading from the N-terminus, the 230-residue chain is Large ribosomal subunit protein uL1 (230 aa).

It belongs to the universal ribosomal protein uL1 family. Part of the 50S ribosomal subunit.

Binds directly to 23S rRNA. The L1 stalk is quite mobile in the ribosome, and is involved in E site tRNA release. In terms of biological role, protein L1 is also a translational repressor protein, it controls the translation of the L11 operon by binding to its mRNA. This is Large ribosomal subunit protein uL1 from Metamycoplasma arthritidis (strain 158L3-1) (Mycoplasma arthritidis).